The primary structure comprises 1252 residues: DNA-directed RNA polymerase subunit beta (1252 aa).

The protein belongs to the RNA polymerase beta chain family. In terms of assembly, the RNAP catalytic core consists of 2 alpha, 1 beta, 1 beta' and 1 omega subunit. When a sigma factor is associated with the core the holoenzyme is formed, which can initiate transcription.

The catalysed reaction is RNA(n) + a ribonucleoside 5'-triphosphate = RNA(n+1) + diphosphate. DNA-dependent RNA polymerase catalyzes the transcription of DNA into RNA using the four ribonucleoside triphosphates as substrates. The chain is DNA-directed RNA polymerase subunit beta from Chlamydia trachomatis serovar D (strain ATCC VR-885 / DSM 19411 / UW-3/Cx).